We begin with the raw amino-acid sequence, 118 residues long: MICOS complex subunit MIC13 (118 aa).

Residues 1–7 (MVARVWS) are Mitochondrial matrix-facing. The helical transmembrane segment at 8-26 (LMRFLIKGSVAGGAVYLVY) threads the bilayer. The Mitochondrial intermembrane portion of the chain corresponds to 27 to 118 (DQELLGPSDK…GWEYVKARTK (92 aa)).

It belongs to the MICOS complex subunit Mic13 family. Component of the mitochondrial contact site and cristae organizing system (MICOS) complex, composed of at least MICOS10/MIC10, CHCHD3/MIC19, CHCHD6/MIC25, APOO/MIC26, MICOS13/MIC13, APOOL/MIC27 and IMMT/MIC60. The MICOS complex associates with mitochondrial outer membrane proteins SAMM50, MTX1 and MTX2 (together described as components of the mitochondrial outer membrane sorting assembly machinery (SAM) complex) and DNAJC11, mitochondrial inner membrane protein TMEM11 and with HSPA9. The MICOS and SAM complexes together with DNAJC11 are part of a large protein complex spanning both membranes termed the mitochondrial intermembrane space bridging (MIB) complex.

The protein resides in the mitochondrion inner membrane. Component of the MICOS complex, a large protein complex of the mitochondrial inner membrane that plays crucial roles in the maintenance of crista junctions, inner membrane architecture, and formation of contact sites to the outer membrane. Constituent of mature MICOS complex, it is required for the formation of cristae junction (CJ) and maintenance of cristae morphology. Required for the incorporation of MICOS10/MIC10 into the MICOS complex. The polypeptide is MICOS complex subunit MIC13 (Homo sapiens (Human)).